A 473-amino-acid chain; its full sequence is ATP synthase subunit beta (473 aa).

158–165 (GGAGVGKT) lines the ATP pocket.

It belongs to the ATPase alpha/beta chains family. As to quaternary structure, F-type ATPases have 2 components, CF(1) - the catalytic core - and CF(0) - the membrane proton channel. CF(1) has five subunits: alpha(3), beta(3), gamma(1), delta(1), epsilon(1). CF(0) has three main subunits: a(1), b(2) and c(9-12). The alpha and beta chains form an alternating ring which encloses part of the gamma chain. CF(1) is attached to CF(0) by a central stalk formed by the gamma and epsilon chains, while a peripheral stalk is formed by the delta and b chains.

It localises to the cell membrane. It carries out the reaction ATP + H2O + 4 H(+)(in) = ADP + phosphate + 5 H(+)(out). Produces ATP from ADP in the presence of a proton gradient across the membrane. The catalytic sites are hosted primarily by the beta subunits. In Priestia megaterium (strain ATCC 12872 / QMB1551) (Bacillus megaterium), this protein is ATP synthase subunit beta.